Here is a 73-residue protein sequence, read N- to C-terminus: Putative neurotoxin NaH-Cpp1a (73 aa).

Positions 1–23 are cleaved as a signal peptide; sequence MKSFYGILCVAVLMMFHLEMSES. 3 disulfide bridges follow: Cys-43/Cys-58, Cys-50/Cys-63, and Cys-57/Cys-70.

Expressed outside of acontia.

The protein resides in the secreted. It localises to the nematocyst. Its function is as follows. Putative neurotoxin. The chain is Putative neurotoxin NaH-Cpp1a from Calliactis polypus (Hermit crab anemone).